Reading from the N-terminus, the 556-residue chain is Myb/SANT-like DNA-binding domain-containing protein 2 (556 aa).

Composition is skewed to polar residues over residues 1 to 10 and 36 to 45; these read MAASCGSSQL and GNPSLSDPST. A disordered region spans residues 1–82; that stretch reads MAASCGSSQL…GGASPSVSFS (82 aa). The span at 56–74 shows a compositional bias: gly residues; that stretch reads PAAGGAGLGGGGAAGGRGG. The Myb-like domain occupies 99–169; the sequence is SWTPAETNAL…QCRERIKTLR (71 aa). The disordered stretch occupies residues 431–458; that stretch reads PRSPLAEPRGADPSNETPGELEVPSPQA.

The polypeptide is Myb/SANT-like DNA-binding domain-containing protein 2 (MSANTD2) (Gallus gallus (Chicken)).